We begin with the raw amino-acid sequence, 441 residues long: Ribulose bisphosphate carboxylase large chain (441 aa).

The residue at position 5 (lysine 5) is an N6,N6,N6-trimethyllysine. The substrate site is built by asparagine 114 and threonine 164. Catalysis depends on lysine 166, which acts as the Proton acceptor. Lysine 168 is a substrate binding site. 3 residues coordinate Mg(2+): lysine 192, aspartate 194, and glutamate 195. Lysine 192 is subject to N6-carboxylysine. The active-site Proton acceptor is the histidine 285. The substrate site is built by arginine 286, histidine 318, and serine 370.

It belongs to the RuBisCO large chain family. Type I subfamily. Heterohexadecamer of 8 large chains and 8 small chains; disulfide-linked. The disulfide link is formed within the large subunit homodimers. Mg(2+) is required as a cofactor. In terms of processing, the disulfide bond which can form in the large chain dimeric partners within the hexadecamer appears to be associated with oxidative stress and protein turnover.

The protein localises to the plastid. Its subcellular location is the chloroplast. The enzyme catalyses 2 (2R)-3-phosphoglycerate + 2 H(+) = D-ribulose 1,5-bisphosphate + CO2 + H2O. It carries out the reaction D-ribulose 1,5-bisphosphate + O2 = 2-phosphoglycolate + (2R)-3-phosphoglycerate + 2 H(+). In terms of biological role, ruBisCO catalyzes two reactions: the carboxylation of D-ribulose 1,5-bisphosphate, the primary event in carbon dioxide fixation, as well as the oxidative fragmentation of the pentose substrate in the photorespiration process. Both reactions occur simultaneously and in competition at the same active site. This Argyrochosma delicatula (Delicate cloak fern) protein is Ribulose bisphosphate carboxylase large chain.